Reading from the N-terminus, the 303-residue chain is Phytochrome-associated serine/threonine-protein phosphatase (303 aa).

Residues D50, H52, D78, and N110 each contribute to the Zn(2+) site. The active-site Proton donor is H111. 2 residues coordinate Zn(2+): H160 and H234.

This sequence belongs to the PPP phosphatase family. PP-6 (PP-V) subfamily. As to quaternary structure, interacts with PHYA and PHYB, mostly when they are phosphorylated and in Pfr forms. Zn(2+) serves as cofactor. As to expression, mostly expressed in flowers and stems.

It localises to the cytoplasm. It catalyses the reaction O-phospho-L-seryl-[protein] + H2O = L-seryl-[protein] + phosphate. The enzyme catalyses O-phospho-L-threonyl-[protein] + H2O = L-threonyl-[protein] + phosphate. Functionally, catalytic subunit of protein phosphatase 6 (PP6). Dephosphorylates phosphorylated phytochromes, with a preference toward Pfr forms. Plays a major role in the photoperiodic control of flowering time in long days by modulating phytochrome signals in flowering time control. This Pisum sativum (Garden pea) protein is Phytochrome-associated serine/threonine-protein phosphatase.